The following is a 493-amino-acid chain: Ecdysteroid UDP-glucosyltransferase (493 aa).

Positions 1 to 17 are cleaved as a signal peptide; that stretch reads MIFILLTTLLAVGGAQT.

Belongs to the UDP-glycosyltransferase family.

Catalyzes the transfer of glucose from UDP-glucose to ecdysteroids which are insect molting hormones. Expression of egt interferes with normal insect development and block molting. This chain is Ecdysteroid UDP-glucosyltransferase (egt), found in Choristoneura fumiferana defective polyhedrosis virus (Cfdef).